Here is a 373-residue protein sequence, read N- to C-terminus: G protein-coupled receptor 137Ba (373 aa).

Residues 1 to 15 are Lumenal-facing; the sequence is MQKDSLPTLSPAVPP. The helical transmembrane segment at 16 to 36 threads the bilayer; sequence YVMLGLTVAYTIFYCLLFVFV. The Cytoplasmic segment spans residues 37–55; sequence YVQLWLVLRYRHKRFSYQT. The chain crosses the membrane as a helical span at residues 56–76; it reads VFLFLCLLWAALRALLFSFYF. Residues 77–84 lie on the Lumenal side of the membrane; sequence KNCVTANT. Residues 85-105 traverse the membrane as a helical segment; the sequence is LGPFCFWLLYCFPVCLQFFTL. Residues 106–135 lie on the Cytoplasmic side of the membrane; sequence SLMNLYFAQVIFKAKSKYSPELQKYRLPLY. Residues 136 to 156 form a helical membrane-spanning segment; sequence LLFLSISLLFLLVNLTCALLV. The Lumenal portion of the chain corresponds to 157–176; the sequence is KINRANTETVVLVRVTVNDS. The helical transmembrane segment at 177 to 197 threads the bilayer; sequence LFVLCAVSLSLCLYRIAKMSL. The Cytoplasmic portion of the chain corresponds to 198 to 213; the sequence is ANIYLEAKGTSVCQVT. Residues 214 to 234 form a helical membrane-spanning segment; sequence LIGVTVVLLYSSRACYNLVVL. The Lumenal segment spans residues 235-268; that stretch reads ALTKIKSINSFDYDWYNVSDQADLKSTLGDAGYV. Residues 269 to 289 traverse the membrane as a helical segment; the sequence is VFGVILFVWELLPTSLVVYFF. The Cytoplasmic portion of the chain corresponds to 290–373; it reads RVRKPTLDRS…HLAPEELNPY (84 aa).

The protein belongs to the GPR137 family.

It is found in the lysosome membrane. Lysosomal integral membrane protein that regulates the localization and activity of mTORC1, a signaling complex promoting cell growth in response to growth factors, energy levels, and amino acids. Interacts with Rag GTPases and increases the lysosomial localization and activity of Rag GTPases and thereby regulates mTORC1 translocation and activity in lysosome. Also acts as a negative regulator of osteoclast activity. May be involved in interleukin-4-induced M2 macrophage polarization. Functionally, also acts as a negative regulator of osteoclast activity. May be involved in interleukin-4-induced M2 macrophage polarization. This chain is G protein-coupled receptor 137Ba, found in Danio rerio (Zebrafish).